We begin with the raw amino-acid sequence, 321 residues long: MYSLLTALSVPLLAGLAHGYANPGSCSGSCNVHDPALIVRESDGKYFRFSTGNEISYASASSINGPWTAIGSVVPAGSKIDLSGNTDLWAPDLSYVDGTYYCLYSVSTFGSQDSAIGVASSTTMELNTWTDHGSVGVASSSSKNYNAIDGNLLVDGSSYYLQFGSFWGDIYQVKMASPLKTAGSASYNIAYNATGTHSEEGSYLFKYGSYYYLFFSSGTCCGYDTSRPAQGEEYKIMVCRSTSATGGFVDKNGNACTESGGTIVLASHGTVYGPGGQGVYDDPTYGPVLYYHYVDTTIGYADDQKLFGWNTIDFSSGWPVV.

The signal sequence occupies residues 1–19 (MYSLLTALSVPLLAGLAHG). The active-site Proton acceptor is the Asp34. The N-linked (GlcNAc...) asparagine glycan is linked to Asn192. Glu200 functions as the Proton donor in the catalytic mechanism.

It belongs to the glycosyl hydrolase 43 family.

It localises to the secreted. The enzyme catalyses Endohydrolysis of (1-&gt;5)-alpha-arabinofuranosidic linkages in (1-&gt;5)-arabinans.. It participates in glycan metabolism; L-arabinan degradation. Functionally, endo-1,5-alpha-L-arabinanase involved in degradation of pectin. Its preferred substrate is linear 1,5-alpha-L-arabinan. The chain is Arabinan endo-1,5-alpha-L-arabinosidase A (abnA) from Aspergillus aculeatus.